The following is a 430-amino-acid chain: Probable glucose-6-phosphate isomerase (430 aa).

The Proton donor role is filled by glutamate 271. Catalysis depends on residues histidine 292, histidine 303, and lysine 403.

It belongs to the GPI family.

Its subcellular location is the cytoplasm. The catalysed reaction is alpha-D-glucose 6-phosphate = beta-D-fructose 6-phosphate. Its pathway is carbohydrate biosynthesis; gluconeogenesis. The protein operates within carbohydrate degradation; glycolysis; D-glyceraldehyde 3-phosphate and glycerone phosphate from D-glucose: step 2/4. In terms of biological role, catalyzes the reversible isomerization of glucose-6-phosphate to fructose-6-phosphate. This Haloquadratum walsbyi (strain DSM 16790 / HBSQ001) protein is Probable glucose-6-phosphate isomerase.